A 415-amino-acid chain; its full sequence is Serine hydroxymethyltransferase (415 aa).

Residues Leu-118 and 122 to 124 contribute to the (6S)-5,6,7,8-tetrahydrofolate site; that span reads GHL. At Lys-227 the chain carries N6-(pyridoxal phosphate)lysine.

Belongs to the SHMT family. As to quaternary structure, homodimer. The cofactor is pyridoxal 5'-phosphate.

Its subcellular location is the cytoplasm. It catalyses the reaction (6R)-5,10-methylene-5,6,7,8-tetrahydrofolate + glycine + H2O = (6S)-5,6,7,8-tetrahydrofolate + L-serine. The protein operates within one-carbon metabolism; tetrahydrofolate interconversion. It participates in amino-acid biosynthesis; glycine biosynthesis; glycine from L-serine: step 1/1. Functionally, catalyzes the reversible interconversion of serine and glycine with tetrahydrofolate (THF) serving as the one-carbon carrier. This reaction serves as the major source of one-carbon groups required for the biosynthesis of purines, thymidylate, methionine, and other important biomolecules. Also exhibits THF-independent aldolase activity toward beta-hydroxyamino acids, producing glycine and aldehydes, via a retro-aldol mechanism. The sequence is that of Serine hydroxymethyltransferase from Elusimicrobium minutum (strain Pei191).